A 482-amino-acid polypeptide reads, in one-letter code: U2 small nuclear ribonucleoprotein auxiliary factor 35 kDa subunit-related protein 2 (482 aa).

A disordered region spans residues 1–59; it reads MAAPEKMTFPEKPSHKKYRAALKKEKRKKRRQELARLRDSGLSQKEEEEDTFIEEQQLE. Over residues 14 to 31 the composition is skewed to basic residues; sequence SHKKYRAALKKEKRKKRR. A Glycyl lysine isopeptide (Lys-Gly) (interchain with G-Cter in SUMO2) cross-link involves residue Lys-45. Residues 46–58 are compositionally biased toward acidic residues; sequence EEEEDTFIEEQQL. Lys-62 is covalently cross-linked (Glycyl lysine isopeptide (Lys-Gly) (interchain with G-Cter in SUMO2)). The interval 115 to 135 is disordered; it reads QRKEREEEEQKRQEKKEKEEA. The C3H1-type 1 zinc finger occupies 166–194; sequence EKDRANCPFYSKTGACRFGDRCSRKHNFP. The RRM domain occupies 198 to 304; the sequence is PTLLIKSMFT…RQLQCEFCPV (107 aa). The C3H1-type 2 zinc finger occupies 306 to 333; that stretch reads RWKMAICGLFEIQQCPRGKHCNFLHVFR. Ser-349 bears the Phosphoserine mark. The interval 351 to 482 is disordered; that stretch reads DRTGSSFGKN…DRTVQSPKSK (132 aa). Composition is skewed to basic and acidic residues over residues 360–375 and 383–398; these read NSERRERMGHHDDYYS and PSPDHSYKRNGESERK. Ser-384 carries the post-translational modification Phosphoserine. The span at 399–412 shows a compositional bias: basic residues; it reads SSRHRGKKSHKRTS. Residues 413–435 are compositionally biased toward basic and acidic residues; sequence KSRERHNSRSRGRNRDRSRDRSR. The segment covering 436 to 454 has biased composition (basic residues); sequence GRGSRSRSRSRSRRSRRSR.

As to quaternary structure, component of the U11/U12 snRNPs that are part of the U12-type spliceosome. Interacts (via RS domain) with SRSF1 and SRSF2. Interacts with U2AF2/U2AF65. Phosphorylated in the RS domain by SRPK1. As to expression, widely expressed.

The protein localises to the nucleus. Its function is as follows. Pre-mRNA-binding protein required for splicing of both U2- and U12-type introns. Selectively interacts with the 3'-splice site of U2- and U12-type pre-mRNAs and promotes different steps in U2 and U12 intron splicing. Recruited to U12 pre-mRNAs in an ATP-dependent manner and is required for assembly of the pre-spliceosome, a precursor to other spliceosomal complexes. For U2-type introns, it is selectively and specifically required for the second step of splicing. The protein is U2 small nuclear ribonucleoprotein auxiliary factor 35 kDa subunit-related protein 2 (ZRSR2) of Homo sapiens (Human).